The chain runs to 117 residues: Photosystem II reaction center Psb28 protein (117 aa).

It belongs to the Psb28 family. As to quaternary structure, part of the photosystem II complex.

It localises to the cellular thylakoid membrane. The chain is Photosystem II reaction center Psb28 protein from Prochlorococcus marinus subsp. pastoris (strain CCMP1986 / NIES-2087 / MED4).